The primary structure comprises 253 residues: Tryptophan synthase alpha chain (253 aa).

Residues glutamate 47 and aspartate 58 each act as proton acceptor in the active site.

It belongs to the TrpA family. In terms of assembly, tetramer of two alpha and two beta chains.

It catalyses the reaction (1S,2R)-1-C-(indol-3-yl)glycerol 3-phosphate + L-serine = D-glyceraldehyde 3-phosphate + L-tryptophan + H2O. It participates in amino-acid biosynthesis; L-tryptophan biosynthesis; L-tryptophan from chorismate: step 5/5. Functionally, the alpha subunit is responsible for the aldol cleavage of indoleglycerol phosphate to indole and glyceraldehyde 3-phosphate. This is Tryptophan synthase alpha chain from Desulforapulum autotrophicum (strain ATCC 43914 / DSM 3382 / VKM B-1955 / HRM2) (Desulfobacterium autotrophicum).